The following is a 248-amino-acid chain: tRNA (guanine-N(1)-)-methyltransferase (248 aa).

Residues glycine 113 and 133–138 contribute to the S-adenosyl-L-methionine site; that span reads IGDYVL. A disordered region spans residues 226–248; the sequence is ARPAQTIRAKGESQKTPKNKTDG. Residues 234-248 show a composition bias toward basic and acidic residues; that stretch reads AKGESQKTPKNKTDG.

The protein belongs to the RNA methyltransferase TrmD family. As to quaternary structure, homodimer.

The protein resides in the cytoplasm. The enzyme catalyses guanosine(37) in tRNA + S-adenosyl-L-methionine = N(1)-methylguanosine(37) in tRNA + S-adenosyl-L-homocysteine + H(+). Specifically methylates guanosine-37 in various tRNAs. The protein is tRNA (guanine-N(1)-)-methyltransferase of Rhodopseudomonas palustris (strain ATCC BAA-98 / CGA009).